A 315-amino-acid polypeptide reads, in one-letter code: Tetratricopeptide repeat protein 23-like (315 aa).

A disordered region spans residues 28-56; sequence KIPEHQRTDESSPTSGSEESEEDTKAKEK. Coiled coils occupy residues 65–90, 179–200, and 250–280; these read REKL…ANKE, REAY…ESYK, and SELV…HQAH.

It is found in the cytoplasm. It localises to the cytoskeleton. The protein localises to the microtubule organizing center. Its subcellular location is the centrosome. The protein resides in the spindle. It is found in the midbody. The sequence is that of Tetratricopeptide repeat protein 23-like (TTC23L) from Bos taurus (Bovine).